We begin with the raw amino-acid sequence, 243 residues long: Cell division protein FtsQ (243 aa).

At Met1 to Lys19 the chain is on the cytoplasmic side. Residues Leu20–Leu40 form a helical membrane-spanning segment. The Periplasmic portion of the chain corresponds to His41–Asn243. The POTRA domain maps to Leu46–Gln115.

It belongs to the FtsQ/DivIB family. FtsQ subfamily. As to quaternary structure, part of a complex composed of FtsB, FtsL and FtsQ.

It is found in the cell inner membrane. Functionally, essential cell division protein. May link together the upstream cell division proteins, which are predominantly cytoplasmic, with the downstream cell division proteins, which are predominantly periplasmic. May control correct divisome assembly. The sequence is that of Cell division protein FtsQ from Coxiella burnetii (strain RSA 493 / Nine Mile phase I).